Reading from the N-terminus, the 284-residue chain is MDAIKKKMQAMKLEKDNAMDRADTLEQQNKEANNRAEKSEEEVFGLQKKLQQLENDLDSVQEALLKANQHLEEKDKALSNAEGEVAALNRRIQLLEEDLERSEERLNTATTKLAEASQAADESERMRKVLENRSLSDEERMDALENQLKEARFLAEEADRKYDEVARKLAMVEADLERAEERAETGESKIVELEEELRVVGNNLKSLEVSEEKANQREEAYKEQIKTLTNKLKAAEARAEFAERSVQKLQKEVDRLEDELVNEKEKYKSITDELDQTFSELSGY.

Methionine 1 carries the N-acetylmethionine modification. Residues 1 to 42 (MDAIKKKMQAMKLEKDNAMDRADTLEQQNKEANNRAEKSEEE) are disordered. A coiled-coil region spans residues 1 to 284 (MDAIKKKMQA…DQTFSELSGY (284 aa)). Over residues 12 to 38 (KLEKDNAMDRADTLEQQNKEANNRAEK) the composition is skewed to basic and acidic residues.

The protein belongs to the tropomyosin family. Homodimer.

Tropomyosin, in association with the troponin complex, plays a central role in the calcium dependent regulation of muscle contraction. The chain is Tropomyosin from Pandalus borealis (Northern red shrimp).